A 139-amino-acid polypeptide reads, in one-letter code: MPLTSLVGQFEGVVYTQPEKLVERHGWLEAWKCKAWMEDDPSQVVTLLLAYRSPLCRDTKPMYRPVAEEILKADQVDVLARGFRHDDNMMHGRGEFLVARLRPHSFVESPMCPSLDEIREVVGSTVETALTGNGEMAAP.

The protein is Gene 70 protein (70) of Mycobacterium (Mycobacteriophage D29).